The following is a 78-amino-acid chain: RNA-binding protein Hfq (78 aa).

A Sm domain is found at 9 to 69; that stretch reads DHFLNQLRKE…ISTFAPQRNV (61 aa).

Belongs to the Hfq family. Homohexamer.

Its function is as follows. RNA chaperone that binds small regulatory RNA (sRNAs) and mRNAs to facilitate mRNA translational regulation in response to envelope stress, environmental stress and changes in metabolite concentrations. Also binds with high specificity to tRNAs. The polypeptide is RNA-binding protein Hfq (Halalkalibacterium halodurans (strain ATCC BAA-125 / DSM 18197 / FERM 7344 / JCM 9153 / C-125) (Bacillus halodurans)).